We begin with the raw amino-acid sequence, 787 residues long: Protein smoothened (787 aa).

The first 27 residues, 1 to 27 (MAAARPARGPELPLLGLLLLLLLGDPG), serve as a signal peptide directing secretion. Over 28–233 (RGAASSGNAT…EAEHQDMHSY (206 aa)) the chain is Extracellular. The tract at residues 30–60 (AASSGNATGPGPRSAGGSARRSAAVTGPPPP) is disordered. N-linked (GlcNAc...) asparagine glycosylation is present at asparagine 35. Positions 38 to 53 (GPGPRSAGGSARRSAA) are enriched in low complexity. 5 disulfide bridges follow: cysteine 64-cysteine 178, cysteine 70-cysteine 134, cysteine 78-cysteine 127, cysteine 118-cysteine 154, and cysteine 147-cysteine 169. An FZ domain is found at 65–181 (GRAAPCEPLR…DRFPEGCTNE (117 aa)). Residue aspartate 95 coordinates cholesterol. N-linked (GlcNAc...) asparagine glycosylation occurs at asparagine 188. 2 disulfides stabilise this stretch: cysteine 193–cysteine 213 and cysteine 217–cysteine 295. A helical transmembrane segment spans residues 234–254 (IAAFGAVTGLCTLFTLATFVA). At 255-262 (DWRNSNRY) the chain is on the cytoplasmic side. A helical membrane pass occupies residues 263 to 283 (PAVILFYVNACFFVGSIGWLA). Residues 284–314 (QFMDGARREIVCRADGTMRLGEPTSNETLSC) are Extracellular-facing. N-linked (GlcNAc...) asparagine glycosylation is present at asparagine 309. Cysteines 314 and 390 form a disulfide. The helical transmembrane segment at 315–335 (VIIFVIVYYALMAGVVWFVVL) threads the bilayer. Residues 336–358 (TYAWHTSFKALGTTYQPLSGKTS) lie on the Cytoplasmic side of the membrane. The chain crosses the membrane as a helical span at residues 359–379 (YFHLLTWSLPFVLTVAILAVA). Over 380–402 (QVDGDSVSGICFVGYKNYRYRAG) the chain is Extracellular. Residue tyrosine 394 participates in cholesterol binding. Residues 403-423 (FVLAPIGLVLIVGGYFLIRGV) traverse the membrane as a helical segment. Residues 424 to 451 (MTLFSIKSNHPGLLSEKAASKINETMLR) are Cytoplasmic-facing. Residues 452–472 (LGIFGFLAFGFVLITFSCHFY) traverse the membrane as a helical segment. Over 473–524 (DFFNQAEWERSFRDYVLCQANVTIGLPTKQPIPDCEIKNRPSLLVEKINLFA) the chain is Extracellular. An intrachain disulfide couples cysteine 490 to cysteine 507. Residues 525–545 (MFGTGIAMSTWVWTKATLLIW) traverse the membrane as a helical segment. The segment at 538–569 (TKATLLIWRRTWCRLTGQSDDEPKRIKKSKMI) is interaction with BBS5 and BBS7. The Cytoplasmic portion of the chain corresponds to 546–787 (RRTWCRLTGQ…TELMDADSDF (242 aa)). Phosphoserine is present on residues serine 556, serine 574, and serine 590. The segment at 570 to 653 (AKAFSKRHEL…TPVPPEEQAN (84 aa)) is required for interaction with PRKACA. The segment at 581–593 (QNPGQELSFSMHT) is interaction with DLG5. The residue at position 593 (threonine 593) is a Phosphothreonine. Phosphoserine is present on residues serine 595 and serine 638. Residues threonine 640 and threonine 644 each carry the phosphothreonine modification. A Phosphoserine modification is found at serine 662. The tract at residues 667 to 704 (KRLGRKKKRRKRKKEVCPLAPPPELHPPAPAPSTIPRL) is disordered. Positions 668–680 (RLGRKKKRRKRKK) are enriched in basic residues. Residues 685–699 (LAPPPELHPPAPAPS) show a composition bias toward pro residues.

It belongs to the G-protein coupled receptor Fz/Smo family. As to quaternary structure, homodimer. Interacts (via C-terminus) with protein kinase A catalytic subunit PRKACA; interacts with free PRKACA subunits and the interaction leads to sequestration of PRKACA at the membrane, preventing PRKACA-mediated phosphorylation of GLI transcription factors. Interacts with ARRB2. Interacts with KIF7. Interacts with BBS5 and BBS7; the interactions are indicative for the association of SMO with the BBsome complex to facilitate ciliary localization of SMO. Interacts with DLG5 and SDCBP. Interacts with GAS8/DRC4. Phosphorylation by GRK kinases is required for interaction with protein kinase A catalytic subunit PRKACA.

The protein localises to the cell membrane. It localises to the cell projection. The protein resides in the cilium. Its function is as follows. G protein-coupled receptor which associates with the patched protein (PTCH) to transduce hedgehog protein signaling. Binding of sonic hedgehog (SHH) to its receptor patched prevents inhibition of smoothened (SMO) by patched. When active, SMO binds to and sequesters protein kinase A catalytic subunit PRKACA at the cell membrane, preventing PRKACA-mediated phosphorylation of GLI transcription factors which releases the GLI proteins from PRKACA-mediated inhibition and allows for transcriptional activation of hedgehog pathway target genes. Required for the accumulation of KIF7, GLI2 and GLI3 in the cilia. Interacts with DLG5 at the ciliary base to induce the accumulation of KIF7 and GLI2 at the ciliary tip for GLI2 activation. This chain is Protein smoothened (SMO), found in Homo sapiens (Human).